The following is a 93-amino-acid chain: Small ribosomal subunit protein bS20 (93 aa).

Positions 1–11 (MPQHKSAEKRV) are enriched in basic and acidic residues. The disordered stretch occupies residues 1–23 (MPQHKSAEKRVRQSKRRNARNRV). Positions 12 to 23 (RQSKRRNARNRV) are enriched in basic residues.

This sequence belongs to the bacterial ribosomal protein bS20 family.

Binds directly to 16S ribosomal RNA. In Chloroherpeton thalassium (strain ATCC 35110 / GB-78), this protein is Small ribosomal subunit protein bS20.